A 145-amino-acid chain; its full sequence is D-aminoacyl-tRNA deacylase (145 aa).

The Gly-cisPro motif, important for rejection of L-amino acids motif lies at 137–138; that stretch reads GP.

It belongs to the DTD family. Homodimer.

It localises to the cytoplasm. It catalyses the reaction glycyl-tRNA(Ala) + H2O = tRNA(Ala) + glycine + H(+). The catalysed reaction is a D-aminoacyl-tRNA + H2O = a tRNA + a D-alpha-amino acid + H(+). An aminoacyl-tRNA editing enzyme that deacylates mischarged D-aminoacyl-tRNAs. Also deacylates mischarged glycyl-tRNA(Ala), protecting cells against glycine mischarging by AlaRS. Acts via tRNA-based rather than protein-based catalysis; rejects L-amino acids rather than detecting D-amino acids in the active site. By recycling D-aminoacyl-tRNA to D-amino acids and free tRNA molecules, this enzyme counteracts the toxicity associated with the formation of D-aminoacyl-tRNA entities in vivo and helps enforce protein L-homochirality. The protein is D-aminoacyl-tRNA deacylase of Sodalis glossinidius (strain morsitans).